We begin with the raw amino-acid sequence, 79 residues long: Cytochrome c-551 (79 aa).

Residues 1-14 are compositionally biased toward polar residues; that stretch reads DGQSIYESGTSPTC. Residues 1–35 form a disordered region; it reads DGQSIYESGTSPTCASCHDRGTAGAPKINEPGDWD. Residues cysteine 14, cysteine 17, histidine 18, and methionine 55 each contribute to the heme c site.

In terms of processing, binds 1 heme c group covalently per subunit.

The sequence is that of Cytochrome c-551 from Halorhodospira halochloris (Ectothiorhodospira halochloris).